The chain runs to 311 residues: Ribosomal RNA small subunit methyltransferase H (311 aa).

S-adenosyl-L-methionine contacts are provided by residues 34–36 (GGH), Asp54, Phe80, Asp104, and Gln111.

It belongs to the methyltransferase superfamily. RsmH family.

The protein localises to the cytoplasm. It carries out the reaction cytidine(1402) in 16S rRNA + S-adenosyl-L-methionine = N(4)-methylcytidine(1402) in 16S rRNA + S-adenosyl-L-homocysteine + H(+). Its function is as follows. Specifically methylates the N4 position of cytidine in position 1402 (C1402) of 16S rRNA. This Teredinibacter turnerae (strain ATCC 39867 / T7901) protein is Ribosomal RNA small subunit methyltransferase H.